Consider the following 76-residue polypeptide: Short coiled-coil protein B (76 aa).

Positions 6-52 (ENQVELEEKTRLINQVLELQNTLEDLSARVDAVKEENLKLKSENQVL) form a coiled coil.

This sequence belongs to the SCOC family.

Its subcellular location is the golgi apparatus membrane. The protein resides in the golgi apparatus. The protein localises to the trans-Golgi network. It is found in the cytoplasm. It localises to the cytosol. Its function is as follows. Positive regulator of amino acid starvation-induced autophagy. The chain is Short coiled-coil protein B (scocb) from Danio rerio (Zebrafish).